Reading from the N-terminus, the 99-residue chain is Goannatyrotoxin-Vere1 (99 aa).

An N-terminal signal peptide occupies residues 1–28 (MIASMKPWPLVMVAALCILFCLGTLVDA). Tyrosine 64 is subject to Tyrosine amide. A propeptide spans 68–99 (SSPETLMSELIFGENSNSDHSSRSRFDDSYMW) (C-terminal extension).

Belongs to the NPY family. Expressed by the mandibular venom gland.

It is found in the secreted. In terms of biological role, shows a potent unique triphasic action, rapid biphasic hypertension followed by prolonged hypotension. The protein is Goannatyrotoxin-Vere1 of Varanus eremius (Rusty desert monitor).